The chain runs to 588 residues: MARGGLGAEEASLRSNALSWLACGLLALLANAWIILSISAKQQKHKPLELLLCFLAGTHILMAAVPLTTFAVVQLRRQASSDYDWNESICKVFVSTYYTLALATCFTVASLSYHRMWMVRWPVNYRLSNAKKQALHAVMGIWMVSFILSTLPSIGWHNNGERYYARGCQFIVSKIGLGFGVCFSLLLLGGIVMGLVCVAITFYQTLWARPRRARQARRAGGSVGTKAGGLGGLGTRPAFEVPAIVVEDTRGKRRSSLDGSESAKTSLQVTNLVSAIVFLYDSLTGVPILVVSFFSLKSDSAPPWMVLAVLWCSMAQTLLLPSFIWSCERYRADVRTVWEQCVAIMSEDDGDDDGTCDDYTDGRVCKIRFDANGATGSGSRDPTQVKLLPGRHMLFPPLERVHYLQVPLSRRLSHDETNIFSTPRAPGSFLHKWSSSDDIRILPAQSRALGGPPEYLGQRHRLEDEEDEEEAEGGGLASLRQFLESGVLGSGGGPPRGPGFFREEITTFIDETPLPSPTASPGPSPRRPRPLGFSPRRLSLGSPDSRAVGLPLGLSAGRRCSLTGSEGSSRAWGRPWGPGNPIFPQLTL.

The Extracellular segment spans residues 1 to 17 (MARGGLGAEEASLRSNA). A helical membrane pass occupies residues 18–38 (LSWLACGLLALLANAWIILSI). Over 39 to 49 (SAKQQKHKPLE) the chain is Cytoplasmic. The chain crosses the membrane as a helical span at residues 50–70 (LLLCFLAGTHILMAAVPLTTF). Over 71–91 (AVVQLRRQASSDYDWNESICK) the chain is Extracellular. Residue N86 is glycosylated (N-linked (GlcNAc...) asparagine). A helical membrane pass occupies residues 92 to 112 (VFVSTYYTLALATCFTVASLS). Residues 113–133 (YHRMWMVRWPVNYRLSNAKKQ) lie on the Cytoplasmic side of the membrane. Residues 134 to 154 (ALHAVMGIWMVSFILSTLPSI) traverse the membrane as a helical segment. The Extracellular portion of the chain corresponds to 155–174 (GWHNNGERYYARGCQFIVSK). Residues 175 to 195 (IGLGFGVCFSLLLLGGIVMGL) traverse the membrane as a helical segment. Over 196–275 (VCVAITFYQT…SLQVTNLVSA (80 aa)) the chain is Cytoplasmic. The chain crosses the membrane as a helical span at residues 276 to 296 (IVFLYDSLTGVPILVVSFFSL). Over 297 to 303 (KSDSAPP) the chain is Extracellular. Residues 304-324 (WMVLAVLWCSMAQTLLLPSFI) traverse the membrane as a helical segment. Residues 325–588 (WSCERYRADV…GNPIFPQLTL (264 aa)) are Cytoplasmic-facing. S413 and S435 each carry phosphoserine. Disordered regions lie at residues 511–545 (ETPL…SPDS) and 561–588 (SLTG…QLTL). Pro residues predominate over residues 514 to 525 (LPSPTASPGPSP). The span at 530-540 (PLGFSPRRLSL) shows a compositional bias: low complexity.

It belongs to the G-protein coupled receptor 1 family.

Its subcellular location is the cell membrane. Functionally, orphan receptor. The protein is Probable G-protein coupled receptor 162 (Gpr162) of Mus musculus (Mouse).